A 944-amino-acid polypeptide reads, in one-letter code: UvrABC system protein A (944 aa).

Gly-31–Ser-38 serves as a coordination point for ATP. The C4-type zinc finger occupies Cys-253–Cys-280. ABC transporter domains lie at Trp-309–Leu-586 and Arg-606–Lys-936. Gly-639–Ser-646 is an ATP binding site. A C4-type zinc finger spans residues Cys-739–Cys-765.

Belongs to the ABC transporter superfamily. UvrA family. In terms of assembly, forms a heterotetramer with UvrB during the search for lesions.

The protein resides in the cytoplasm. Its function is as follows. The UvrABC repair system catalyzes the recognition and processing of DNA lesions. UvrA is an ATPase and a DNA-binding protein. A damage recognition complex composed of 2 UvrA and 2 UvrB subunits scans DNA for abnormalities. When the presence of a lesion has been verified by UvrB, the UvrA molecules dissociate. This chain is UvrABC system protein A, found in Pseudomonas putida (strain ATCC 47054 / DSM 6125 / CFBP 8728 / NCIMB 11950 / KT2440).